Consider the following 350-residue polypeptide: Protein XRP2 (350 aa).

Positions 1-10 (MGCFFSKRRK) are enriched in basic residues. Positions 1–31 (MGCFFSKRRKADKESRPENEEERPKQYSWDQ) are disordered. Residue glycine 2 is the site of N-myristoyl glycine attachment. Cysteine 3 carries the S-palmitoyl cysteine lipid modification. Over residues 11 to 31 (ADKESRPENEEERPKQYSWDQ) the composition is skewed to basic and acidic residues. A C-CAP/cofactor C-like domain is found at 24 to 179 (PKQYSWDQRE…TWSNIHDFTP (156 aa)). GTP is bound by residues 98–99 (GS) and 115–118 (QQFR).

It belongs to the TBCC family. In terms of assembly, found in a complex with ARL3, RP2 and UNC119 (or UNC119B); RP2 induces hydrolysis of GTP ARL3 in the complex, leading to the release of UNC119 (or UNC119B). Interacts with ARL3; interaction is direct and stimulated with the activated GTP-bound form of ARL3. Myristoylated on Gly-2; which may be required for membrane targeting. Post-translationally, palmitoylated on Cys-3; which may be required for plasma membrane targeting. Mutation of Cys-3 targets the protein to internal membranes. In terms of tissue distribution, ubiquitous. Expressed in the rod and cone photoreceptors, extending from the tips of the outer segment (OS) through the inner segment (IS) and outer nuclear layer (ONL) and into the synaptic terminals of the outer plexiform layer (ONL). Also detected in the bipolar, horizontal and amacrine cells in the inner nuclear layer (INL), extending to the inner plexiform layer (IPL) and though the ganglion cell layer (GCL) and into the nerve fiber layer (NFL) (at protein level).

The protein resides in the cell membrane. Its subcellular location is the cell projection. It is found in the cilium. Its function is as follows. Acts as a GTPase-activating protein (GAP) involved in trafficking between the Golgi and the ciliary membrane. Involved in localization of proteins, such as NPHP3, to the cilium membrane by inducing hydrolysis of GTP ARL3, leading to the release of UNC119 (or UNC119B). Acts as a GTPase-activating protein (GAP) for tubulin in concert with tubulin-specific chaperone C, but does not enhance tubulin heterodimerization. Acts as a guanine nucleotide dissociation inhibitor towards ADP-ribosylation factor-like proteins. The protein is Protein XRP2 (RP2) of Homo sapiens (Human).